Reading from the N-terminus, the 262-residue chain is Ornithine carbamoyltransferase (262 aa).

Carbamoyl phosphate contacts are provided by residues 3–7, Q30, R54, and 81–84; these read STRTR and HPTQ. L-ornithine is bound by residues N114, D178, and 182–183; that span reads SM. Carbamoyl phosphate-binding positions include 219–222 and T247; that span reads HCLP.

Belongs to the aspartate/ornithine carbamoyltransferase superfamily. OTCase family.

It is found in the cytoplasm. It catalyses the reaction carbamoyl phosphate + L-ornithine = L-citrulline + phosphate + H(+). Its pathway is amino-acid biosynthesis; L-arginine biosynthesis; L-arginine from L-ornithine and carbamoyl phosphate: step 1/3. In terms of biological role, reversibly catalyzes the transfer of the carbamoyl group from carbamoyl phosphate (CP) to the N(epsilon) atom of ornithine (ORN) to produce L-citrulline. This chain is Ornithine carbamoyltransferase (argF), found in Neisseria lactamica.